Here is a 324-residue protein sequence, read N- to C-terminus: Probable UDP-sugar transporter protein SLC35A4 (324 aa).

Residues Met-1–Arg-18 lie on the Cytoplasmic side of the membrane. Residues Trp-19 to Leu-39 form a helical membrane-spanning segment. Topologically, residues Cys-40–Ser-52 are lumenal. A helical membrane pass occupies residues Ala-53–Trp-73. Residues Gln-74 to Gln-85 lie on the Cytoplasmic side of the membrane. The helical transmembrane segment at Ala-86–Leu-106 threads the bilayer. The Lumenal portion of the chain corresponds to Gln-107–Ala-140. The helical transmembrane segment at Arg-141–Leu-161 threads the bilayer. Residues Arg-162–Ser-177 lie on the Cytoplasmic side of the membrane. A helical transmembrane segment spans residues Gly-178–Ile-198. The Lumenal segment spans residues Ser-199 to Arg-214. The helical transmembrane segment at Leu-215–Leu-235 threads the bilayer. At His-236–Gly-248 the chain is on the cytoplasmic side. A helical membrane pass occupies residues Phe-249–Met-271. Topologically, residues Lys-272–Arg-279 are lumenal. The chain crosses the membrane as a helical span at residues Leu-280–Leu-300. The Cytoplasmic segment spans residues Gln-301–Arg-324.

The protein belongs to the nucleotide-sugar transporter family. SLC35A subfamily. In terms of assembly, found in a complex with SLC35A2 and SLC35A3.

Its subcellular location is the golgi apparatus membrane. It catalyses the reaction CDP-L-ribitol(in) + CDP(out) = CDP-L-ribitol(out) + CDP(in). Its function is as follows. Mediates the transport of CDP-ribitol. Does not exhibit CMP-sialic acid, UDP-galactose and UDP-N-acetylglucosamine transport activity. In Sus scrofa (Pig), this protein is Probable UDP-sugar transporter protein SLC35A4.